The primary structure comprises 140 residues: Small ribosomal subunit protein uS19 (140 aa).

The segment at 120–140 (RPKHSAPGIGATRSSAHVSKK) is disordered. Positions 131 to 140 (TRSSAHVSKK) are enriched in polar residues.

It belongs to the universal ribosomal protein uS19 family.

Protein S19 forms a complex with S13 that binds strongly to the 16S ribosomal RNA. The polypeptide is Small ribosomal subunit protein uS19 (Nanoarchaeum equitans (strain Kin4-M)).